Here is a 210-residue protein sequence, read N- to C-terminus: MTHGDNRDGPGRETRSSGPLVLASASPRRVDLLAQIGLVPDAIDPADLDETPAADELPRPYAERVARAKALAVAPRHPGAWVLAGDTVVARGRRILPKAEDAKTAKTCLEMLSGARHRVIGAIALVTPEGRLIERSVVSQVAFKRLSAAEIAEYLAGDEWRGKAGGYAIQGRAAAFVRWLEGSHSNVVGLPLFETNALLAGTGYRPGRDG.

Residues 1 to 15 (MTHGDNRDGPGRETR) are compositionally biased toward basic and acidic residues. A disordered region spans residues 1–22 (MTHGDNRDGPGRETRSSGPLVL). D86 acts as the Proton acceptor in catalysis.

This sequence belongs to the Maf family. YhdE subfamily. The cofactor is a divalent metal cation.

Its subcellular location is the cytoplasm. It carries out the reaction dTTP + H2O = dTMP + diphosphate + H(+). The enzyme catalyses UTP + H2O = UMP + diphosphate + H(+). Nucleoside triphosphate pyrophosphatase that hydrolyzes dTTP and UTP. May have a dual role in cell division arrest and in preventing the incorporation of modified nucleotides into cellular nucleic acids. The chain is dTTP/UTP pyrophosphatase from Rhodospirillum rubrum (strain ATCC 11170 / ATH 1.1.1 / DSM 467 / LMG 4362 / NCIMB 8255 / S1).